A 196-amino-acid chain; its full sequence is Large ribosomal subunit protein bL9 (196 aa).

Positions Asn-172 to Ala-196 are disordered. Residues Phe-181–Ala-196 are compositionally biased toward acidic residues.

The protein belongs to the bacterial ribosomal protein bL9 family.

Its function is as follows. Binds to the 23S rRNA. This chain is Large ribosomal subunit protein bL9, found in Chelativorans sp. (strain BNC1).